We begin with the raw amino-acid sequence, 136 residues long: ATP synthase epsilon chain (136 aa).

A disordered region spans residues 100–120; sequence QGALEEANRGEDKPNQLKASN. The span at 105 to 114 shows a compositional bias: basic and acidic residues; that stretch reads EANRGEDKPN.

It belongs to the ATPase epsilon chain family. As to quaternary structure, F-type ATPases have 2 components, CF(1) - the catalytic core - and CF(0) - the membrane proton channel. CF(1) has five subunits: alpha(3), beta(3), gamma(1), delta(1), epsilon(1). CF(0) has three main subunits: a, b and c.

The protein resides in the cellular thylakoid membrane. Produces ATP from ADP in the presence of a proton gradient across the membrane. This Synechocystis sp. (strain ATCC 27184 / PCC 6803 / Kazusa) protein is ATP synthase epsilon chain (atpC).